Reading from the N-terminus, the 498-residue chain is MRINPTTSGPGVSTLEKKNLGRIAQIIGPVLDVAFPPGKMPNIYNALVVKGRDTVGQQINVACEVQQLLGNNRVRAVAMSATDGLMRGMEVIDTGAPLSVPVGGATLGRIFNVLGEPVDNLGPVDTRTTSPIHRSAPAFIQLDTKLSIFETGIKVVDLLAPYRRGGKIGLFGGAGVGKTVLIMELINNIAKAHGGVSVFGGVGERTREGNDLYMEMKESGVINEQNIAESKVALVHGQMNEPPGARMRVGLTALTMAEYFRDVNEQDVLLFIDNIFRFVQAGSEVSALLGRMPSAVGYQPTLSTEMGSLQERITSTKEGSITSIQAVYVPADDLTDPAPATTFAHLDATTVLSRGLAAKGIYPAVDPLDSTSTMLQPRIVGEEHYETAQRVKQTSQRYKELQDIIAILGLDELSEEDRLTVARARKMERFLSQPFFVAEVFTGSPGKYVGLAETIRGFQLILSGELDGLPEQAFYLVGNIDEATAKAMKLELESNLKK.

172 to 179 (GGAGVGKT) lines the ATP pocket.

It belongs to the ATPase alpha/beta chains family. As to quaternary structure, F-type ATPases have 2 components, CF(1) - the catalytic core - and CF(0) - the membrane proton channel. CF(1) has five subunits: alpha(3), beta(3), gamma(1), delta(1), epsilon(1). CF(0) has four main subunits: a(1), b(1), b'(1) and c(9-12).

It is found in the plastid. The protein resides in the chloroplast thylakoid membrane. It carries out the reaction ATP + H2O + 4 H(+)(in) = ADP + phosphate + 5 H(+)(out). In terms of biological role, produces ATP from ADP in the presence of a proton gradient across the membrane. The catalytic sites are hosted primarily by the beta subunits. This chain is ATP synthase subunit beta, chloroplastic, found in Idiospermum australiense (Ribbonwood tree).